The chain runs to 435 residues: GTPase Obg (435 aa).

The Obg domain maps to 1-158; sequence MFLDTAKVSV…RQLELELKIL (158 aa). An OBG-type G domain is found at 159 to 336; the sequence is ADVGLVGFPS…LLEATAELLA (178 aa). GTP is bound by residues 165–172, 190–194, 212–215, 282–285, and 317–319; these read GFPSVGKS, FTTIV, DLPG, NKMD, and SSL. The Mg(2+) site is built by serine 172 and threonine 192. The 79-residue stretch at 357 to 435 folds into the OCT domain; it reads GFAAEEKAFE…IGKFEFEFVD (79 aa).

It belongs to the TRAFAC class OBG-HflX-like GTPase superfamily. OBG GTPase family. Monomer. The cofactor is Mg(2+).

The protein localises to the cytoplasm. An essential GTPase which binds GTP, GDP and possibly (p)ppGpp with moderate affinity, with high nucleotide exchange rates and a fairly low GTP hydrolysis rate. Plays a role in control of the cell cycle, stress response, ribosome biogenesis and in those bacteria that undergo differentiation, in morphogenesis control. This Streptococcus equi subsp. zooepidemicus (strain MGCS10565) protein is GTPase Obg.